The primary structure comprises 159 residues: Serine-protein kinase RsbW (159 aa).

This sequence belongs to the anti-sigma-factor family.

It carries out the reaction L-seryl-[protein] + ATP = O-phospho-L-seryl-[protein] + ADP + H(+). The catalysed reaction is L-threonyl-[protein] + ATP = O-phospho-L-threonyl-[protein] + ADP + H(+). Negative regulator of sigma-B activity. Phosphorylates and inactivates its specific antagonist protein, RsbV. Upon phosphorylation of RsbV, RsbW is released and binds to sigma-B, thereby blocking its ability to form an RNA polymerase holoenzyme (E-sigma-B). The protein is Serine-protein kinase RsbW of Staphylococcus aureus (strain MRSA252).